Reading from the N-terminus, the 290-residue chain is 4-diphosphocytidyl-2-C-methyl-D-erythritol kinase (290 aa).

Lys-13 is an active-site residue. An ATP-binding site is contributed by Pro-96 to Ser-106. Asp-138 is an active-site residue.

Belongs to the GHMP kinase family. IspE subfamily.

It catalyses the reaction 4-CDP-2-C-methyl-D-erythritol + ATP = 4-CDP-2-C-methyl-D-erythritol 2-phosphate + ADP + H(+). Its pathway is isoprenoid biosynthesis; isopentenyl diphosphate biosynthesis via DXP pathway; isopentenyl diphosphate from 1-deoxy-D-xylulose 5-phosphate: step 3/6. Its function is as follows. Catalyzes the phosphorylation of the position 2 hydroxy group of 4-diphosphocytidyl-2C-methyl-D-erythritol. In Vibrio cholerae serotype O1 (strain ATCC 39541 / Classical Ogawa 395 / O395), this protein is 4-diphosphocytidyl-2-C-methyl-D-erythritol kinase.